The primary structure comprises 423 residues: Kynureninase (423 aa).

Pyridoxal 5'-phosphate-binding positions include leucine 105, serine 106, 133–136, aspartate 218, histidine 221, and tyrosine 243; that span reads FPSD. An N6-(pyridoxal phosphate)lysine modification is found at lysine 244. Positions 273 and 301 each coordinate pyridoxal 5'-phosphate.

Belongs to the kynureninase family. Homodimer. Pyridoxal 5'-phosphate is required as a cofactor.

It catalyses the reaction L-kynurenine + H2O = anthranilate + L-alanine + H(+). The enzyme catalyses 3-hydroxy-L-kynurenine + H2O = 3-hydroxyanthranilate + L-alanine + H(+). It functions in the pathway amino-acid degradation; L-kynurenine degradation; L-alanine and anthranilate from L-kynurenine: step 1/1. It participates in cofactor biosynthesis; NAD(+) biosynthesis; quinolinate from L-kynurenine: step 2/3. In terms of biological role, catalyzes the cleavage of L-kynurenine (L-Kyn) and L-3-hydroxykynurenine (L-3OHKyn) into anthranilic acid (AA) and 3-hydroxyanthranilic acid (3-OHAA), respectively. The protein is Kynureninase of Xanthomonas euvesicatoria pv. vesicatoria (strain 85-10) (Xanthomonas campestris pv. vesicatoria).